Here is a 1051-residue protein sequence, read N- to C-terminus: Eukaryotic translation initiation factor 3 subunit A (1051 aa).

Positions 92–121 form a coiled coil; that stretch reads LKKFIELAEKKVTEAQAKADEIQSSLESAA. Residues 339-523 enclose the PCI domain; the sequence is MTKAASFVLL…GVLTFDTDIF (185 aa). Residues 608–905 adopt a coiled-coil conformation; the sequence is RVLIEKKKEA…EAEARRAARK (298 aa). 4 stretches are compositionally biased toward basic and acidic residues: residues 617 to 632, 642 to 664, 794 to 901, and 916 to 926; these read AATD…EETR, EAEK…RDEQ, KEVS…EARR, and AELERPVERTA. Disordered stretches follow at residues 617–664 and 794–1051; these read AATD…RDEQ and KEVS…QQQQ. 2 stretches are compositionally biased toward low complexity: residues 948–961 and 1010–1039; these read KEAA…AAAE and SSSS…SPAP.

Belongs to the eIF-3 subunit A family. Component of the eukaryotic translation initiation factor 3 (eIF-3) complex.

Its subcellular location is the cytoplasm. In terms of biological role, RNA-binding component of the eukaryotic translation initiation factor 3 (eIF-3) complex, which is involved in protein synthesis of a specialized repertoire of mRNAs and, together with other initiation factors, stimulates binding of mRNA and methionyl-tRNAi to the 40S ribosome. The eIF-3 complex specifically targets and initiates translation of a subset of mRNAs involved in cell proliferation. The protein is Eukaryotic translation initiation factor 3 subunit A (tif32) of Aspergillus fumigatus (strain CBS 144.89 / FGSC A1163 / CEA10) (Neosartorya fumigata).